A 247-amino-acid polypeptide reads, in one-letter code: 1-(5-phosphoribosyl)-5-[(5-phosphoribosylamino)methylideneamino] imidazole-4-carboxamide isomerase (247 aa).

The active-site Proton acceptor is the Asp16. Asp135 acts as the Proton donor in catalysis.

It belongs to the HisA/HisF family.

The protein localises to the cytoplasm. It catalyses the reaction 1-(5-phospho-beta-D-ribosyl)-5-[(5-phospho-beta-D-ribosylamino)methylideneamino]imidazole-4-carboxamide = 5-[(5-phospho-1-deoxy-D-ribulos-1-ylimino)methylamino]-1-(5-phospho-beta-D-ribosyl)imidazole-4-carboxamide. The protein operates within amino-acid biosynthesis; L-histidine biosynthesis; L-histidine from 5-phospho-alpha-D-ribose 1-diphosphate: step 4/9. This Paenarthrobacter aurescens (strain TC1) protein is 1-(5-phosphoribosyl)-5-[(5-phosphoribosylamino)methylideneamino] imidazole-4-carboxamide isomerase.